Here is a 425-residue protein sequence, read N- to C-terminus: Serine--tRNA ligase (425 aa).

228-230 (TAE) serves as a coordination point for L-serine. Residue 259-261 (RSE) participates in ATP binding. Glutamate 282 is a binding site for L-serine. Residue 346-349 (EIAS) participates in ATP binding. An L-serine-binding site is contributed by serine 382.

Belongs to the class-II aminoacyl-tRNA synthetase family. Type-1 seryl-tRNA synthetase subfamily. As to quaternary structure, homodimer. The tRNA molecule binds across the dimer.

It localises to the cytoplasm. The enzyme catalyses tRNA(Ser) + L-serine + ATP = L-seryl-tRNA(Ser) + AMP + diphosphate + H(+). It carries out the reaction tRNA(Sec) + L-serine + ATP = L-seryl-tRNA(Sec) + AMP + diphosphate + H(+). Its pathway is aminoacyl-tRNA biosynthesis; selenocysteinyl-tRNA(Sec) biosynthesis; L-seryl-tRNA(Sec) from L-serine and tRNA(Sec): step 1/1. Catalyzes the attachment of serine to tRNA(Ser). Is also able to aminoacylate tRNA(Sec) with serine, to form the misacylated tRNA L-seryl-tRNA(Sec), which will be further converted into selenocysteinyl-tRNA(Sec). In Rickettsia massiliae (strain Mtu5), this protein is Serine--tRNA ligase.